Reading from the N-terminus, the 393-residue chain is Beta-1,4-galactosyltransferase 3 (393 aa).

The Cytoplasmic portion of the chain corresponds to 1–10 (MLRRLLERPC). The chain crosses the membrane as a helical; Signal-anchor for type II membrane protein span at residues 11–31 (TLALLVGSQLAVMMYLSLGGF). Topologically, residues 32 to 393 (RSLSALFGRD…ANHTALRGSH (362 aa)) are lumenal. A glycan (N-linked (GlcNAc...) asparagine) is linked at Asn-57. Residues Cys-77 and Cys-119 are joined by a disulfide bond. Residue 130-134 (PHRAR) coordinates UDP-alpha-D-galactose. N-linked (GlcNAc...) asparagine glycosylation is present at Asn-166. Residues 169 to 171 (FNR), 196 to 197 (VD), Tyr-226, and Trp-258 contribute to the UDP-alpha-D-galactose site. Cys-190 and Cys-209 are joined by a disulfide. Mn(2+) is bound at residue Asp-197. 260–263 (GEDD) is an N-acetyl-D-glucosamine binding site. A Mn(2+)-binding site is contributed by His-291. Residue 291 to 293 (HRG) coordinates UDP-alpha-D-galactose. Arg-303 lines the N-acetyl-D-glucosamine pocket. Residues Asn-337 and Asn-385 are each glycosylated (N-linked (GlcNAc...) asparagine). Residues 339–393 (TADIGTDPRGPRAPSGPRYPPGSSQAFRQEMLQRRPPARPGPLSTANHTALRGSH) form a disordered region.

It belongs to the glycosyltransferase 7 family. Mn(2+) is required as a cofactor. In terms of tissue distribution, found in various tissues. Highest expression in placenta, prostate, testis, ovary, intestine and muscle, and in fetal brain.

The protein resides in the golgi apparatus. The protein localises to the golgi stack membrane. The catalysed reaction is an N-acetyl-beta-D-glucosaminyl derivative + UDP-alpha-D-galactose = a beta-D-galactosyl-(1-&gt;4)-N-acetyl-beta-D-glucosaminyl derivative + UDP + H(+). It carries out the reaction N-acetyl-D-glucosamine + UDP-alpha-D-galactose = beta-D-galactosyl-(1-&gt;4)-N-acetyl-D-glucosamine + UDP + H(+). It catalyses the reaction a beta-D-GlcNAc-(1-&gt;3)-beta-D-Gal-(1-&gt;4)-beta-D-Glc-(1&lt;-&gt;1)-Cer(d18:1(4E)) + UDP-alpha-D-galactose = a neolactoside nLc4Cer(d18:1(4E)) + UDP + H(+). The enzyme catalyses a beta-D-glucosylceramide + UDP-alpha-D-galactose = a beta-D-galactosyl-(1-&gt;4)-beta-D-glucosyl-(1&lt;-&gt;1)-ceramide + UDP + H(+). The catalysed reaction is a neolactoside IV(3)-beta-GlcNAc-nLc4Cer + UDP-alpha-D-galactose = a neolactoside nLc6Cer + UDP + H(+). The protein operates within protein modification; protein glycosylation. Its function is as follows. Responsible for the synthesis of complex-type N-linked oligosaccharides in many glycoproteins as well as the carbohydrate moieties of glycolipids. The sequence is that of Beta-1,4-galactosyltransferase 3 from Homo sapiens (Human).